Reading from the N-terminus, the 179-residue chain is Large ribosomal subunit protein uL6 (179 aa).

The protein belongs to the universal ribosomal protein uL6 family. In terms of assembly, part of the 50S ribosomal subunit.

Its function is as follows. This protein binds to the 23S rRNA, and is important in its secondary structure. It is located near the subunit interface in the base of the L7/L12 stalk, and near the tRNA binding site of the peptidyltransferase center. This is Large ribosomal subunit protein uL6 from Mycobacterium ulcerans (strain Agy99).